Here is a 226-residue protein sequence, read N- to C-terminus: Chalcone--flavanone isomerase (226 aa).

Substrate contacts are provided by threonine 47, asparagine 112, and serine 189.

The protein belongs to the chalcone isomerase family.

The catalysed reaction is a chalcone = a flavanone.. It functions in the pathway secondary metabolite biosynthesis; flavonoid biosynthesis. Its function is as follows. Catalyzes the intramolecular cyclization of bicyclic chalcones into tricyclic (S)-flavanones. Responsible for the isomerization of 4,2',4',6'-tetrahydroxychalcone (also termed chalcone) into naringenin. The chain is Chalcone--flavanone isomerase (CHI) from Allium cepa (Onion).